The following is a 237-amino-acid chain: Uridylate kinase (237 aa).

12–15 (KLSG) serves as a coordination point for ATP. Gly53 contacts UMP. ATP contacts are provided by Gly54 and Arg58. UMP contacts are provided by residues Asp73 and 134–141 (TGNPYFTT). ATP contacts are provided by Thr161, Tyr167, and Asp170.

This sequence belongs to the UMP kinase family. As to quaternary structure, homohexamer.

The protein localises to the cytoplasm. The enzyme catalyses UMP + ATP = UDP + ADP. It functions in the pathway pyrimidine metabolism; CTP biosynthesis via de novo pathway; UDP from UMP (UMPK route): step 1/1. Its activity is regulated as follows. Inhibited by UTP. Functionally, catalyzes the reversible phosphorylation of UMP to UDP. This is Uridylate kinase from Rhizorhabdus wittichii (strain DSM 6014 / CCUG 31198 / JCM 15750 / NBRC 105917 / EY 4224 / RW1) (Sphingomonas wittichii).